Here is a 388-residue protein sequence, read N- to C-terminus: Na(+)/H(+) antiporter NhaA (388 aa).

Topologically, residues 1–11 are cytoplasmic; that stretch reads MKHLHRFFSSD. The chain crosses the membrane as a helical span at residues 12 to 31; the sequence is ASGGIILIIAAILAMIMANS. Residues 32–58 are Periplasmic-facing; it reads GATSGWYHDFLETPVQLRVGSLEINKN. The helical transmembrane segment at 59-80 threads the bilayer; it reads MLLWINDALMAVFFLLVGLEVK. Over 81-96 the chain is Cytoplasmic; that stretch reads RELMQGSLASLRQAAF. Residues 97–116 form a helical membrane-spanning segment; sequence PVIAAIGGMIVPALLYLAFN. At 117–122 the chain is on the periplasmic side; sequence YADPIT. A helical membrane pass occupies residues 123–130; sequence REGWAIPA. Over 131 to 154 the chain is Cytoplasmic; sequence ATDIAFALGVLALLGSRVPLVLKI. A helical membrane pass occupies residues 155–176; that stretch reads FLMALAIIDDLGAIIIIALFYT. Topologically, residues 177–180 are periplasmic; it reads NDLS. A helical membrane pass occupies residues 181-200; that stretch reads MASLGVAAVAIAVLAVLNLC. Topologically, residues 201–204 are cytoplasmic; it reads GVRR. A helical membrane pass occupies residues 205–222; sequence TGVYILVGVVLWTAVLKS. Residue glycine 223 is a topological domain, periplasmic. Residues 224–236 traverse the membrane as a helical segment; it reads VHATLAGVIVGFF. Residues 237–253 are Cytoplasmic-facing; sequence IPLKEKHGRSPAKRLEH. The chain crosses the membrane as a helical span at residues 254-272; it reads VLHPWVAYLILPLFAFANA. Residues 273–286 lie on the Periplasmic side of the membrane; it reads GVSLQGVTLDGLTS. The helical transmembrane segment at 287–310 threads the bilayer; sequence ILPLGIIAGLLIGKPLGISLFCWL. Residues 311–339 are Cytoplasmic-facing; that stretch reads ALRLKLAHLPEGTTYQQIMVVGILCGIGF. A helical transmembrane segment spans residues 340 to 350; it reads TMSIFIASLAF. Residues 351–357 are Periplasmic-facing; the sequence is GSVDPEL. Residues 358–380 traverse the membrane as a helical segment; the sequence is INWAKLGILVGSISSAVIGYSWL. Residues 381 to 388 are Cytoplasmic-facing; the sequence is RVRLRPSV.

Belongs to the NhaA Na(+)/H(+) (TC 2.A.33) antiporter family.

Its subcellular location is the cell inner membrane. It catalyses the reaction Na(+)(in) + 2 H(+)(out) = Na(+)(out) + 2 H(+)(in). In terms of biological role, na(+)/H(+) antiporter that extrudes sodium in exchange for external protons. The polypeptide is Na(+)/H(+) antiporter NhaA (Shigella flexneri).